We begin with the raw amino-acid sequence, 371 residues long: MTEPVRIRVESQAPYDVVVGRGLLGELVDMLRDASVVALVHQPSITTTVETVRDELAAAGLDAHRVEVPDAEDGKSLAVAGFCWEVLGKIGLDRDGVVVSFGGGAVTDVAGFVAGTWMRGVRVVHVPTTLLGMVDAAIGGKAGINTDAGKNLVGVFHEPSAVLVDLATLEGLPRNELVAGMAEVVKAGFIADPEILRLVEADPQGALDPAGEVIAELVRRAIQVKADVVASDLRESHLREVLNYGHTLAHAIERRERYRWRHGAAVSVGLVFAAELARLAGRLDDETADRHKKVLDLLGLPTTYDPDALAQLLEGMRVDKKTRSGVLRFVVLDGLAKPGRLEGPDPSLIAAAYSALTGAPEQKSGGSGVLL.

Residues 70-75, 104-108, 128-129, Lys-141, and Lys-150 each bind NAD(+); these read DAEDGK, GAVTD, and TT. Positions 183, 246, and 262 each coordinate Zn(2+).

The protein belongs to the sugar phosphate cyclases superfamily. Dehydroquinate synthase family. Co(2+) is required as a cofactor. The cofactor is Zn(2+). NAD(+) serves as cofactor.

Its subcellular location is the cytoplasm. It carries out the reaction 7-phospho-2-dehydro-3-deoxy-D-arabino-heptonate = 3-dehydroquinate + phosphate. It functions in the pathway metabolic intermediate biosynthesis; chorismate biosynthesis; chorismate from D-erythrose 4-phosphate and phosphoenolpyruvate: step 2/7. In terms of biological role, catalyzes the conversion of 3-deoxy-D-arabino-heptulosonate 7-phosphate (DAHP) to dehydroquinate (DHQ). This is 3-dehydroquinate synthase from Saccharopolyspora erythraea (strain ATCC 11635 / DSM 40517 / JCM 4748 / NBRC 13426 / NCIMB 8594 / NRRL 2338).